Here is a 381-residue protein sequence, read N- to C-terminus: Cytochrome b (381 aa).

The next 4 helical transmembrane spans lie at 33 to 53 (FGSL…FLAM), 77 to 98 (WLIR…FLHV), 113 to 133 (WNIG…GYVL), and 178 to 198 (FFAL…VHLT). Residues H83 and H97 each coordinate heme b. Heme b-binding residues include H182 and H196. H201 is a binding site for a ubiquinone. Transmembrane regions (helical) follow at residues 226–246 (IKDI…ALFS), 288–308 (LGGV…PFLH), 320–340 (ISQT…WIGG), and 347–367 (FIII…HPMP).

The protein belongs to the cytochrome b family. The cytochrome bc1 complex contains 11 subunits: 3 respiratory subunits (MT-CYB, CYC1 and UQCRFS1), 2 core proteins (UQCRC1 and UQCRC2) and 6 low-molecular weight proteins (UQCRH/QCR6, UQCRB/QCR7, UQCRQ/QCR8, UQCR10/QCR9, UQCR11/QCR10 and a cleavage product of UQCRFS1). This cytochrome bc1 complex then forms a dimer. It depends on heme b as a cofactor.

It localises to the mitochondrion inner membrane. In terms of biological role, component of the ubiquinol-cytochrome c reductase complex (complex III or cytochrome b-c1 complex) that is part of the mitochondrial respiratory chain. The b-c1 complex mediates electron transfer from ubiquinol to cytochrome c. Contributes to the generation of a proton gradient across the mitochondrial membrane that is then used for ATP synthesis. The protein is Cytochrome b (MT-CYB) of Sminthopsis youngsoni (Lesser hairy-footed dunnart).